Here is a 204-residue protein sequence, read N- to C-terminus: Pectinesterase inhibitor 9 (204 aa).

The first 23 residues, 1–23 (MELKNTIFLVILLSITILQSSSA), serve as a signal peptide directing secretion. An N-linked (GlcNAc...) asparagine glycan is attached at Asn-26. Disulfide bonds link Cys-38-Cys-47 and Cys-106-Cys-157.

Belongs to the PMEI family. In terms of assembly, binds reversibly to PME3 to inhibit its activity; the stability of the PME3-PMEI9 complex and the inhibition of the pectin methylesterase (PME) activity is pH-dependent, based on protonation status of amino-acids at the complex interface. As to expression, highly expressed in roots and etiolated hypocotyls. Expressed in seedlings, leaves, stems, siliques, floral buds and mature seeds.

It localises to the secreted. It is found in the extracellular space. Its subcellular location is the apoplast. Pectin methylesterase (PME) inhibitor that probably targets root-expressed PME and PME3 in a moderate pH-dependent manner, mainly in slightly acidic conditions (pH 6.3 and 5.0) and to some extent at pH 7.5; this processus relies on changes in the protonation of amino acids involved in intermolecular and intramolecular interactions. Regulates de-methylesterification of pectins in roots and affects root growth. This is Pectinesterase inhibitor 9 from Arabidopsis thaliana (Mouse-ear cress).